Reading from the N-terminus, the 490-residue chain is Inosine-5'-monophosphate dehydrogenase (490 aa).

CBS domains follow at residues 96–154 and 158–218; these read MIIN…SKPV and MTKE…CKDE. NAD(+)-binding positions include D252 and 302–304; that span reads GVG. K(+) is bound by residues G304 and G306. S307 provides a ligand contact to IMP. A K(+)-binding site is contributed by C309. C309 (thioimidate intermediate) is an active-site residue. Residues 342-344, 365-366, and 389-393 each bind IMP; these read DGG, GN, and YRGMG. The active-site Proton acceptor is R406. E418 is an IMP binding site. Residues E472, S473, and H474 each contribute to the K(+) site.

The protein belongs to the IMPDH/GMPR family. Homotetramer. K(+) is required as a cofactor.

The enzyme catalyses IMP + NAD(+) + H2O = XMP + NADH + H(+). Its pathway is purine metabolism; XMP biosynthesis via de novo pathway; XMP from IMP: step 1/1. With respect to regulation, mycophenolic acid (MPA) is a non-competitive inhibitor that prevents formation of the closed enzyme conformation by binding to the same site as the amobile flap. In contrast, mizoribine monophosphate (MZP) is a competitive inhibitor that induces the closed conformation. MPA is a potent inhibitor of mammalian IMPDHs but a poor inhibitor of the bacterial enzymes. MZP is a more potent inhibitor of bacterial IMPDH. In terms of biological role, catalyzes the conversion of inosine 5'-phosphate (IMP) to xanthosine 5'-phosphate (XMP), the first committed and rate-limiting step in the de novo synthesis of guanine nucleotides, and therefore plays an important role in the regulation of cell growth. The chain is Inosine-5'-monophosphate dehydrogenase from Aquifex aeolicus (strain VF5).